The following is an 891-amino-acid chain: Metabotropic glutamate receptor-like protein N (891 aa).

Residues 1-399 (MKLYTHKINR…FKPISKTIEY (399 aa)) lie on the Extracellular side of the membrane. Residues Asn52, Asn85, Asn88, Asn125, Asn132, Asn224, Asn298, Asn312, Asn320, Asn325, Asn353, Asn363, and Asn375 are each glycosylated (N-linked (GlcNAc...) asparagine). Residues 52–91 (NNSNSNSNNNNNNNNNNNNNNNNNNNNNNNNNNNNSNNSN) are disordered. The chain crosses the membrane as a helical span at residues 400–420 (GITIVSSILIGALIIIQICII). Residues 421-433 (KYKNKPSFKSASP) lie on the Cytoplasmic side of the membrane. The helical transmembrane segment at 434-454 (TFLIFIVIGGIFVYIGVIIWV) threads the bilayer. Over 455–461 (SGVNVFT) the chain is Extracellular. The helical transmembrane segment at 462–482 (CNAKFWLISLGLTTMIGGIVV) threads the bilayer. The Cytoplasmic segment spans residues 483-505 (KNFRIWLIFDNPKLYHIKITNLQ). The chain crosses the membrane as a helical span at residues 506 to 526 (LLPWVLGMFLLNVFLLSLITG). The Extracellular segment spans residues 527–555 (LGKLTPFKVFPNDEKFSSYEIQCEMMDGG). The chain crosses the membrane as a helical span at residues 556–576 (LIALYFLLGYFAIIVMIGIFV). At 577–592 (SWKIRIVDIEEFNESK) the chain is on the cytoplasmic side. A helical transmembrane segment spans residues 593–613 (SVAYSLYSIVFCLLIIAPLTI). Residues 614-625 (SKTGHNTEILCS) are Extracellular-facing. The chain crosses the membrane as a helical span at residues 626 to 646 (GFIFIVAAIITIMFIPKFWAL). Residues 647–891 (KIYGAEGSNE…SDSNSDSIIQ (245 aa)) are Cytoplasmic-facing. Disordered stretches follow at residues 660–689 (QSSS…KKSS), 742–827 (NEMT…ILTP), and 869–891 (DEVI…SIIQ). The span at 742-767 (NEMTYNDDPTYTEPSEQPTYTESSEQ) shows a compositional bias: polar residues. Residues 772-782 (PRTLTATPRTN) are compositionally biased toward low complexity. Residues 783-820 (DLTTPRTNDLTTPRTNDLITPRTNDLSTPRTNDLNTPR) show a composition bias toward polar residues. Residues 872–881 (IENSDSESES) are compositionally biased toward acidic residues. Low complexity predominate over residues 882–891 (SDSNSDSIIQ).

The protein belongs to the G-protein coupled receptor 3 family. GABA-B receptor subfamily.

It is found in the membrane. In Dictyostelium discoideum (Social amoeba), this protein is Metabotropic glutamate receptor-like protein N (grlN).